The following is a 241-amino-acid chain: Lipoprotein MxiJ (241 aa).

The N-terminal stretch at Met1–Gly17 is a signal peptide. Cys18 carries the N-palmitoyl cysteine lipid modification. Cys18 carries S-diacylglycerol cysteine lipidation.

This sequence belongs to the YscJ lipoprotein family.

The protein localises to the cell outer membrane. Functionally, involved in the secretion of the Ipa antigens. In Shigella sonnei, this protein is Lipoprotein MxiJ (mxiJ).